A 425-amino-acid polypeptide reads, in one-letter code: MAKNIQAIRGMNDYLPADTAVWQRVEQILKQVLSSYGFSEIRMPIVEQTPLFKRAIGEVTDVVEKEMYTFDDRNGESLTLRPEGTAGCVRAGIEHGLLYNQEQRLWYIGPMFRYERPQKGRYRQFHQIGAEVFGLQGPDIDAELIMMTARWWKALGIADHVSLELNSIGSLEARANYRNALVAFLEQHIEVLDEDCKRRMYSNPLRVLDSKNPDIQALLNDAPALGDYLDDESREHFAGLCHQLDAAGIAYRVNQRLVRGLDYYNRTVFEWVTDSLGAQGTVCAGGRYDGLVEQLGGRATPAVGFAMGLERLVLLVQAVNPEFEPMRVVDVYVIASGDGVQSAAMLLAERLRDALPELKLMTNFGGGNFKKQFARADKWGARIALVLGEDEVANKQLVIKDLRNGEQQTLAQSDAAATLAALLQL.

Belongs to the class-II aminoacyl-tRNA synthetase family. In terms of assembly, homodimer.

The protein resides in the cytoplasm. The catalysed reaction is tRNA(His) + L-histidine + ATP = L-histidyl-tRNA(His) + AMP + diphosphate + H(+). This Erwinia tasmaniensis (strain DSM 17950 / CFBP 7177 / CIP 109463 / NCPPB 4357 / Et1/99) protein is Histidine--tRNA ligase.